The following is a 536-amino-acid chain: Ribulokinase (536 aa).

Belongs to the ribulokinase family.

It catalyses the reaction D-ribulose + ATP = D-ribulose 5-phosphate + ADP + H(+). The enzyme catalyses L-ribulose + ATP = L-ribulose 5-phosphate + ADP + H(+). Its pathway is carbohydrate degradation; L-arabinose degradation via L-ribulose; D-xylulose 5-phosphate from L-arabinose (bacterial route): step 2/3. The polypeptide is Ribulokinase (Staphylococcus epidermidis (strain ATCC 35984 / DSM 28319 / BCRC 17069 / CCUG 31568 / BM 3577 / RP62A)).